The following is a 120-amino-acid chain: UPF0231 protein YacL (120 aa).

This sequence belongs to the UPF0231 family.

This chain is UPF0231 protein YacL, found in Escherichia fergusonii (strain ATCC 35469 / DSM 13698 / CCUG 18766 / IAM 14443 / JCM 21226 / LMG 7866 / NBRC 102419 / NCTC 12128 / CDC 0568-73).